Reading from the N-terminus, the 557-residue chain is Leucine-rich glioma-inactivated protein 1 (557 aa).

A signal peptide spans M1–G34. Residues K35 to L72 form the LRRNT domain. LRR repeat units follow at residues S92–G113, H116–G137, and S140–G161. The LRRCT domain maps to N173–I223. An N-linked (GlcNAc...) asparagine glycan is attached at N192. 7 EAR repeats span residues E225 to H267, T271 to S313, K317 to G364, G366 to K415, S419 to G462, S464 to A506, and K510 to I552. N-linked (GlcNAc...) asparagine glycosylation occurs at N277. N422 carries N-linked (GlcNAc...) asparagine glycosylation.

Oligomer. Interacts with KCNA1 within a complex containing KCNA1, KCNA4 and KCNAB1. Part of a complex containing ADAM22, DLG4/PSD95 and CACNG2 (stargazin). Can bind to ADAM11 and ADAM23. Post-translationally, glycosylated.

The protein resides in the secreted. It localises to the synapse. Its subcellular location is the cytoplasm. Regulates voltage-gated potassium channels assembled from KCNA1, KCNA4 and KCNAB1. It slows down channel inactivation by precluding channel closure mediated by the KCNAB1 subunit. Ligand for ADAM22 that positively regulates synaptic transmission mediated by AMPA-type glutamate receptors. Plays a role in suppressing the production of MMP1/3 through the phosphatidylinositol 3-kinase/ERK pathway. This is Leucine-rich glioma-inactivated protein 1 (LGI1) from Pan troglodytes (Chimpanzee).